The chain runs to 148 residues: MPVVISEKQFNDAHQAFKLHDKKDEGAVSNKELTNLFKSLALHVSDDKLQQWVDEMDEDATGVIRWEKFKILFERKVQEDEDERELRSAFRVLDKNNQGVIDVEDLRWILKSLGDDLNDDEIQDMINETDTDGSGTVDYEEFSALMLG.

EF-hand domains follow at residues 8–43, 44–79, 81–116, and 117–148; these read KQFN…LALH, VSDD…KVQE, EDER…LGDD, and LNDD…LMLG. Positions 130, 132, 134, 136, and 141 each coordinate Ca(2+).

This sequence belongs to the troponin C family.

In terms of biological role, troponin is the central regulatory protein of striated muscle contraction. Tn consists of three components: Tn-I which is the inhibitor of actomyosin ATPase, Tn-T which contains the binding site for tropomyosin and Tn-C. The binding of calcium to Tn-C abolishes the inhibitory action of Tn on actin filaments. This chain is Troponin C, found in Todarodes pacificus (Japanese flying squid).